Here is a 153-residue protein sequence, read N- to C-terminus: Iron-sulfur cluster assembly scaffold protein IscU 1 (153 aa).

[2Fe-2S] cluster-binding residues include C33, C58, H101, and C102.

The protein belongs to the NifU family. As to quaternary structure, forms a heterotetramer with IscS2.

Its function is as follows. A scaffold on which IscS assembles Fe-S clusters. Subsequently gives the nascent cluster to other proteins. It is likely that Fe-S cluster coordination is flexible as the role of this complex is to build and then hand off Fe-S clusters. In Archaeoglobus fulgidus (strain ATCC 49558 / DSM 4304 / JCM 9628 / NBRC 100126 / VC-16), this protein is Iron-sulfur cluster assembly scaffold protein IscU 1 (iscU1).